Reading from the N-terminus, the 508-residue chain is UTP--glucose-1-phosphate uridylyltransferase (508 aa).

Residue serine 13 is modified to Phosphoserine. Residues 113-116, lysine 127, glutamine 190, and glycine 222 each bind UTP; that span reads LNGG. 115–116 contributes to the substrate binding site; that stretch reads GG. Lysine 127 is a Mg(2+) binding site. Substrate-binding positions include histidine 223 and 251–253; that span reads NID. Aspartate 253 and lysine 396 together coordinate UTP. Aspartate 253 serves as a coordination point for Mg(2+). Lysine 396 is a catalytic residue. At threonine 426 the chain carries Phosphothreonine. At serine 434 the chain carries Phosphoserine. Position 438 is an N6-acetyllysine (lysine 438). A phosphoserine mark is found at serine 448 and serine 461. An oligomerization region spans residues 457-508; the sequence is HLTVSGDVTFGKNVSLKGTVIIIXNHGDRIDIPPGAVLENKIVSGNLRILDH. The interval 502–503 is critical for end-to-end subunit interaction; the sequence is NL.

This sequence belongs to the UDPGP type 1 family. In terms of assembly, homooctamer.

Its subcellular location is the cytoplasm. The enzyme catalyses alpha-D-glucose 1-phosphate + UTP + H(+) = UDP-alpha-D-glucose + diphosphate. It functions in the pathway glycan biosynthesis; glycogen biosynthesis. Functionally, UTP--glucose-1-phosphate uridylyltransferase catalyzing the conversion of glucose-1-phosphate into UDP-glucose, a crucial precursor for the production of glycogen. The polypeptide is UTP--glucose-1-phosphate uridylyltransferase (UGP2) (Sus scrofa (Pig)).